The primary structure comprises 513 residues: Nitrogenase molybdenum-iron protein beta chain (513 aa).

Cys70, Cys95, and Cys153 together coordinate [8Fe-7S] cluster.

This sequence belongs to the NifD/NifK/NifE/NifN family. As to quaternary structure, tetramer of two alpha and two beta chains. Forms complex with the iron protein (nitrogenase component 2). [8Fe-7S] cluster is required as a cofactor.

The enzyme catalyses N2 + 8 reduced [2Fe-2S]-[ferredoxin] + 16 ATP + 16 H2O = H2 + 8 oxidized [2Fe-2S]-[ferredoxin] + 2 NH4(+) + 16 ADP + 16 phosphate + 6 H(+). Its function is as follows. This molybdenum-iron protein is part of the nitrogenase complex that catalyzes the key enzymatic reactions in nitrogen fixation. The chain is Nitrogenase molybdenum-iron protein beta chain (nifK1) from Sinorhizobium fredii (strain NBRC 101917 / NGR234).